Consider the following 257-residue polypeptide: Indole-3-glycerol phosphate synthase (257 aa).

The protein belongs to the TrpC family.

It carries out the reaction 1-(2-carboxyphenylamino)-1-deoxy-D-ribulose 5-phosphate + H(+) = (1S,2R)-1-C-(indol-3-yl)glycerol 3-phosphate + CO2 + H2O. Its pathway is amino-acid biosynthesis; L-tryptophan biosynthesis; L-tryptophan from chorismate: step 4/5. The polypeptide is Indole-3-glycerol phosphate synthase (Chlorobium chlorochromatii (strain CaD3)).